Reading from the N-terminus, the 216-residue chain is MTSLLIALAAAAGGYLFGSIPFGLVLTRMAGLGDIRAIGSGNIGATNVLRTGRKDLAALTLILDAGKAGIAAAVFGYFLGTTAGLVAGAFAFAGHCFPVWLGFKGGKGVATFVGTMLVVFWPVGLTVIATWLAMAAIFRISSLAALAAALAAPFAALAWGRPDVAIMAGLLTVLIYWLHRANISRLLKGEEPRIGGKKSETSADVSDGDDPDTPAT.

A run of 5 helical transmembrane segments spans residues 5–25 (LIALAAAAGGYLFGSIPFGLV), 70–90 (IAAAVFGYFLGTTAGLVAGAF), 118–138 (VVFWPVGLTVIATWLAMAAIF), 140–160 (ISSLAALAAALAAPFAALAWG), and 164–184 (VAIMAGLLTVLIYWLHRANIS). The segment covering 192–201 (PRIGGKKSET) has biased composition (basic and acidic residues). Positions 192–216 (PRIGGKKSETSADVSDGDDPDTPAT) are disordered. The span at 206-216 (SDGDDPDTPAT) shows a compositional bias: acidic residues.

Belongs to the PlsY family. As to quaternary structure, probably interacts with PlsX.

Its subcellular location is the cell inner membrane. It carries out the reaction an acyl phosphate + sn-glycerol 3-phosphate = a 1-acyl-sn-glycero-3-phosphate + phosphate. Its pathway is lipid metabolism; phospholipid metabolism. Catalyzes the transfer of an acyl group from acyl-phosphate (acyl-PO(4)) to glycerol-3-phosphate (G3P) to form lysophosphatidic acid (LPA). This enzyme utilizes acyl-phosphate as fatty acyl donor, but not acyl-CoA or acyl-ACP. The polypeptide is Glycerol-3-phosphate acyltransferase (Maricaulis maris (strain MCS10) (Caulobacter maris)).